A 460-amino-acid polypeptide reads, in one-letter code: Elongation factor 1-alpha (460 aa).

A N,N,N-trimethylglycine modification is found at glycine 2. Lysine 3 carries the post-translational modification N6,N6-dimethyllysine; alternate. Position 3 is an N6-methyllysine; alternate (lysine 3). In terms of domain architecture, tr-type G spans 6-241; that stretch reads KTHINLVVIG…DAIDPPTRPT (236 aa). The interval 15–22 is G1; it reads GHVDSGKS. 15 to 22 contributes to the GTP binding site; that stretch reads GHVDSGKS. Lysine 31 carries the N6-methyllysine modification. The tract at residues 71–75 is G2; sequence GITID. Lysine 80 is subject to N6,N6,N6-trimethyllysine. Residues 92–95 form a G3 region; that stretch reads DAPG. Residues 92–96 and 154–157 contribute to the GTP site; these read DAPGH and NKMD. The interval 154–157 is G4; it reads NKMD. The G5 stretch occupies residues 193–195; it reads SGF. Position 317 is an N6,N6-dimethyllysine; alternate (lysine 317). Lysine 317 is subject to N6-methyllysine; alternate. Lysine 391 carries the N6-methyllysine modification.

The protein belongs to the TRAFAC class translation factor GTPase superfamily. Classic translation factor GTPase family. EF-Tu/EF-1A subfamily.

It is found in the cytoplasm. In terms of biological role, this protein promotes the GTP-dependent binding of aminoacyl-tRNA to the A-site of ribosomes during protein biosynthesis. The sequence is that of Elongation factor 1-alpha (TEF) from Coccidioides immitis (strain RS) (Valley fever fungus).